Here is a 423-residue protein sequence, read N- to C-terminus: Kynureninase (423 aa).

Pyridoxal 5'-phosphate contacts are provided by residues leucine 105, serine 106, 133-136, aspartate 218, histidine 221, and tyrosine 243; that span reads FPSD. Lysine 244 is subject to N6-(pyridoxal phosphate)lysine. 2 residues coordinate pyridoxal 5'-phosphate: tryptophan 273 and asparagine 301.

Belongs to the kynureninase family. As to quaternary structure, homodimer. Pyridoxal 5'-phosphate serves as cofactor.

It carries out the reaction L-kynurenine + H2O = anthranilate + L-alanine + H(+). It catalyses the reaction 3-hydroxy-L-kynurenine + H2O = 3-hydroxyanthranilate + L-alanine + H(+). It participates in amino-acid degradation; L-kynurenine degradation; L-alanine and anthranilate from L-kynurenine: step 1/1. It functions in the pathway cofactor biosynthesis; NAD(+) biosynthesis; quinolinate from L-kynurenine: step 2/3. Catalyzes the cleavage of L-kynurenine (L-Kyn) and L-3-hydroxykynurenine (L-3OHKyn) into anthranilic acid (AA) and 3-hydroxyanthranilic acid (3-OHAA), respectively. This chain is Kynureninase, found in Xanthomonas oryzae pv. oryzae (strain MAFF 311018).